A 213-amino-acid polypeptide reads, in one-letter code: MDDVVKSLLQRTTSSLTKPAPARPSREEAEAAVEVLLRWTGDDPSREGLRDTPKRVVKAFEEFFSGYNADASDVLSRVFEEVHGYDNMVLVRDIPFSSHCEHHMVPFFGVAHIGYYPSEAGVIGLSKLARLVDIFAKRLQTQEALTAQIIGAIDEHLQPRGCAIMLEAEHMCMSMRGVQKHGTSTLTTQFTGVFKNDPAEQVRFFGMVRNPKS.

The interval 1-27 is disordered; sequence MDDVVKSLLQRTTSSLTKPAPARPSRE. Zn(2+)-binding residues include cysteine 100, histidine 103, and cysteine 172.

Belongs to the GTP cyclohydrolase I family. In terms of assembly, homomer.

It catalyses the reaction GTP + H2O = 7,8-dihydroneopterin 3'-triphosphate + formate + H(+). The protein operates within cofactor biosynthesis; 7,8-dihydroneopterin triphosphate biosynthesis; 7,8-dihydroneopterin triphosphate from GTP: step 1/1. In Beijerinckia indica subsp. indica (strain ATCC 9039 / DSM 1715 / NCIMB 8712), this protein is GTP cyclohydrolase 1.